The following is a 1075-amino-acid chain: DNA-directed RNA polymerase subunit beta (1075 aa).

The protein belongs to the RNA polymerase beta chain family. In plastids the minimal PEP RNA polymerase catalytic core is composed of four subunits: alpha, beta, beta', and beta''. When a (nuclear-encoded) sigma factor is associated with the core the holoenzyme is formed, which can initiate transcription.

The protein resides in the plastid. It is found in the chloroplast. The enzyme catalyses RNA(n) + a ribonucleoside 5'-triphosphate = RNA(n+1) + diphosphate. Functionally, DNA-dependent RNA polymerase catalyzes the transcription of DNA into RNA using the four ribonucleoside triphosphates as substrates. The sequence is that of DNA-directed RNA polymerase subunit beta from Oryza sativa (Rice).